A 334-amino-acid chain; its full sequence is Glyceraldehyde-3-phosphate dehydrogenase 2 (334 aa).

Residues 12–13 (RI), aspartate 35, and arginine 79 contribute to the NAD(+) site. D-glyceraldehyde 3-phosphate-binding positions include 152 to 154 (SCT), threonine 183, arginine 198, 211 to 212 (SG), and arginine 234. Cysteine 153 (nucleophile) is an active-site residue. Asparagine 315 provides a ligand contact to NAD(+).

This sequence belongs to the glyceraldehyde-3-phosphate dehydrogenase family. As to quaternary structure, homotetramer.

It localises to the cytoplasm. The catalysed reaction is D-glyceraldehyde 3-phosphate + phosphate + NAD(+) = (2R)-3-phospho-glyceroyl phosphate + NADH + H(+). It functions in the pathway carbohydrate degradation; glycolysis; pyruvate from D-glyceraldehyde 3-phosphate: step 1/5. Inhibited by pentalenolactone (PL). In terms of biological role, catalyzes the oxidative phosphorylation of glyceraldehyde 3-phosphate (G3P) to 1,3-bisphosphoglycerate (BPG) using the cofactor NAD. The first reaction step involves the formation of a hemiacetal intermediate between G3P and a cysteine residue, and this hemiacetal intermediate is then oxidized to a thioester, with concomitant reduction of NAD to NADH. The reduced NADH is then exchanged with the second NAD, and the thioester is attacked by a nucleophilic inorganic phosphate to produce BPG. The protein is Glyceraldehyde-3-phosphate dehydrogenase 2 (gap2) of Streptomyces arenae.